Consider the following 608-residue polypeptide: MCGIVGYIGDKQATPILLEGLTRLEYRGYDSAGIAILHNGNINIKKAKGRLNVLRELVEKDYMEGTIGIGHTRWATHGEPSDTNSHPHLSQSGLIAVVHNGIIENYLPLKKWLIEEGYNFISETDTEVVANLLEYYYNGDIVEALRKVLDRIEGSYALGVLCKDNPDMIVAARKEAPLIVGIGNGENFIASDIPAILKYTRNVYFLDDHEIAIIKKDSVEFIDVFGRKIGKSLFEVKWDVEAAEKGGYEHFMIKEIHEQPAAIKDTLRGRIINDSQIVLDNINITKEDLEKIEKIFIVACGTAYHAGVVGKYVIESFARIPVEVDVASEFRYRNPIVNERILTIVISQSGETADTIAALKEAKRKGSRVIAITNVVGSSVSREADEVLYTWAGPEIAVASTKAYTTQLIALYLIALDFALKKGTMSSTKVVEIISELKKLPDKVQYLLDNKEVIQKFASEHYNVKDVFYIGRGLDYAVAMEGSLKLKEISYIHSEAYPAGELKHGTLALVEEGTLIIALATQDDLFEKMLSNIKEVKARGGYVVAFAKQGNLQLEGVVDKVIYIPDTLKELTPVLTVVPLQLLAYYMAVEKGCDVDKPRNLAKSVTVE.

The active-site Nucleophile; for GATase activity is the Cys2. The Glutamine amidotransferase type-2 domain occupies 2-217 (CGIVGYIGDK…DHEIAIIKKD (216 aa)). 2 SIS domains span residues 285–424 (TKED…KKGT) and 453–598 (VIQK…VDKP). Lys603 serves as the catalytic For Fru-6P isomerization activity.

In terms of assembly, homodimer.

The protein resides in the cytoplasm. It carries out the reaction D-fructose 6-phosphate + L-glutamine = D-glucosamine 6-phosphate + L-glutamate. Catalyzes the first step in hexosamine metabolism, converting fructose-6P into glucosamine-6P using glutamine as a nitrogen source. This Caldanaerobacter subterraneus subsp. tengcongensis (strain DSM 15242 / JCM 11007 / NBRC 100824 / MB4) (Thermoanaerobacter tengcongensis) protein is Glutamine--fructose-6-phosphate aminotransferase [isomerizing].